The following is a 206-amino-acid chain: Recombination protein RecR (206 aa).

A C4-type zinc finger spans residues 58-73 (CENCHNISDVAVCEIC). The Toprim domain occupies 81–176 (QIVCVVEDVR…ITSSIARGIS (96 aa)).

Belongs to the RecR family.

May play a role in DNA repair. It seems to be involved in an RecBC-independent recombinational process of DNA repair. It may act with RecF and RecO. This is Recombination protein RecR from Flavobacterium psychrophilum (strain ATCC 49511 / DSM 21280 / CIP 103535 / JIP02/86).